The chain runs to 238 residues: MIIIPARLASTRFPRKVLHPINGIPMIIHTAQRASQVDEVVIATDSEEVMKIAKQYGFDAVLTSKTHESGTDRVNEAATLLGLDAKEIIINVQADEPLIEPQVIKKVKELTIKHTKSCEIMLCSAYKKISFDATNDPNSVKVVLDASDKALYFSRSQIPYPRSDVKTINIHLGIYGYTKEMLQKFCTLPTAPLEQIEKLEQLRALYHGYRIAMVEVTSQSIGIDTPEDLKKINASFFE.

It belongs to the KdsB family.

The protein resides in the cytoplasm. The enzyme catalyses 3-deoxy-alpha-D-manno-oct-2-ulosonate + CTP = CMP-3-deoxy-beta-D-manno-octulosonate + diphosphate. Its pathway is nucleotide-sugar biosynthesis; CMP-3-deoxy-D-manno-octulosonate biosynthesis; CMP-3-deoxy-D-manno-octulosonate from 3-deoxy-D-manno-octulosonate and CTP: step 1/1. The protein operates within bacterial outer membrane biogenesis; lipopolysaccharide biosynthesis. Activates KDO (a required 8-carbon sugar) for incorporation into bacterial lipopolysaccharide in Gram-negative bacteria. In Nitratiruptor sp. (strain SB155-2), this protein is 3-deoxy-manno-octulosonate cytidylyltransferase.